Consider the following 204-residue polypeptide: Large ribosomal subunit protein uL4 (204 aa).

Residues 49–74 (AKKRGEVSGGGKKPWSQKGGGRARAG) form a disordered region. Residues 55-71 (VSGGGKKPWSQKGGGRA) are compositionally biased toward gly residues.

It belongs to the universal ribosomal protein uL4 family. As to quaternary structure, part of the 50S ribosomal subunit.

In terms of biological role, one of the primary rRNA binding proteins, this protein initially binds near the 5'-end of the 23S rRNA. It is important during the early stages of 50S assembly. It makes multiple contacts with different domains of the 23S rRNA in the assembled 50S subunit and ribosome. Its function is as follows. Forms part of the polypeptide exit tunnel. The protein is Large ribosomal subunit protein uL4 of Wolinella succinogenes (strain ATCC 29543 / DSM 1740 / CCUG 13145 / JCM 31913 / LMG 7466 / NCTC 11488 / FDC 602W) (Vibrio succinogenes).